The following is a 243-amino-acid chain: Segregation and condensation protein A (243 aa).

The protein belongs to the ScpA family. In terms of assembly, component of a cohesin-like complex composed of ScpA, ScpB and the Smc homodimer, in which ScpA and ScpB bind to the head domain of Smc. The presence of the three proteins is required for the association of the complex with DNA.

It localises to the cytoplasm. Its function is as follows. Participates in chromosomal partition during cell division. May act via the formation of a condensin-like complex containing Smc and ScpB that pull DNA away from mid-cell into both cell halves. The protein is Segregation and condensation protein A of Thermoanaerobacter pseudethanolicus (strain ATCC 33223 / 39E) (Clostridium thermohydrosulfuricum).